Consider the following 559-residue polypeptide: Dihydroxy-acid dehydratase (559 aa).

Asp78 is a binding site for Mg(2+). Cys119 is a binding site for [2Fe-2S] cluster. Mg(2+) is bound by residues Asp120 and Lys121. Lys121 is subject to N6-carboxylysine. Cys192 lines the [2Fe-2S] cluster pocket. Residue Glu446 coordinates Mg(2+). Ser472 acts as the Proton acceptor in catalysis.

Belongs to the IlvD/Edd family. Homodimer. It depends on [2Fe-2S] cluster as a cofactor. Requires Mg(2+) as cofactor.

It catalyses the reaction (2R)-2,3-dihydroxy-3-methylbutanoate = 3-methyl-2-oxobutanoate + H2O. The enzyme catalyses (2R,3R)-2,3-dihydroxy-3-methylpentanoate = (S)-3-methyl-2-oxopentanoate + H2O. The protein operates within amino-acid biosynthesis; L-isoleucine biosynthesis; L-isoleucine from 2-oxobutanoate: step 3/4. Its pathway is amino-acid biosynthesis; L-valine biosynthesis; L-valine from pyruvate: step 3/4. Its function is as follows. Functions in the biosynthesis of branched-chain amino acids. Catalyzes the dehydration of (2R,3R)-2,3-dihydroxy-3-methylpentanoate (2,3-dihydroxy-3-methylvalerate) into 2-oxo-3-methylpentanoate (2-oxo-3-methylvalerate) and of (2R)-2,3-dihydroxy-3-methylbutanoate (2,3-dihydroxyisovalerate) into 2-oxo-3-methylbutanoate (2-oxoisovalerate), the penultimate precursor to L-isoleucine and L-valine, respectively. This is Dihydroxy-acid dehydratase from Wolinella succinogenes (strain ATCC 29543 / DSM 1740 / CCUG 13145 / JCM 31913 / LMG 7466 / NCTC 11488 / FDC 602W) (Vibrio succinogenes).